A 218-amino-acid polypeptide reads, in one-letter code: Response regulator UvrY (218 aa).

The Response regulatory domain maps to 3–119; the sequence is NVLLVDDHEL…EVVSAIRSVY (117 aa). Aspartate 54 is modified (4-aspartylphosphate). The HTH luxR-type domain maps to 143–208; sequence TESPFASLSE…ELTHLAIRHG (66 aa). Residues 167–186 constitute a DNA-binding region (H-T-H motif); it reads VNEISEQLNLSPKTVNSYRY.

Post-translationally, phosphorylated and activated by BarA.

The protein localises to the cytoplasm. In terms of biological role, member of the two-component regulatory system UvrY/BarA involved in the regulation of carbon metabolism via the CsrA/CsrB regulatory system. UvrY activates the transcription of the untranslated csrB RNA and of barA, in an autoregulatory loop. Mediates the effects of CsrA on csrB RNA by BarA-dependent and BarA-independent mechanisms. In Escherichia coli (strain K12), this protein is Response regulator UvrY (uvrY).